A 341-amino-acid chain; its full sequence is Trimethylamine N-oxide transport system ATP-binding protein TmoW (341 aa).

In terms of domain architecture, ABC transporter spans 6 to 265 (IKCESVYKIF…PATEYVRKFT (260 aa)). An ATP-binding site is contributed by 61–68 (GLSGSGKS).

This sequence belongs to the ABC transporter superfamily. As to quaternary structure, the complex is probably composed of two ATP-binding proteins (TmoW), two transmembrane proteins (TmoV) and a solute-binding protein (TmoX).

It localises to the cell inner membrane. It carries out the reaction a quaternary ammonium(out) + ATP + H2O = a quaternary ammonium(in) + ADP + phosphate + H(+). Part of the ABC transporter complex TmoXWV involved in trimethylamine N-oxide (TMAO) import. Responsible for energy coupling to the transport system. This Pelagibacter ubique (strain HTCC1062) protein is Trimethylamine N-oxide transport system ATP-binding protein TmoW.